The following is a 144-amino-acid chain: Transcription antitermination protein NusB (144 aa).

This sequence belongs to the NusB family.

Its function is as follows. Involved in transcription antitermination. Required for transcription of ribosomal RNA (rRNA) genes. Binds specifically to the boxA antiterminator sequence of the ribosomal RNA (rrn) operons. In Buchnera aphidicola subsp. Baizongia pistaciae (strain Bp), this protein is Transcription antitermination protein NusB.